The primary structure comprises 121 residues: Homeobox protein HD-6 (121 aa).

The homeobox DNA-binding region spans 28-87 (PKRSRIQLHDWQSMLLEHSFRMNPYPDRIEKYNLFLKTKIPMKNVKIWFQNRRAREKSFY).

Its subcellular location is the nucleus. The sequence is that of Homeobox protein HD-6 (HD-6) from Encephalitozoon cuniculi (strain GB-M1) (Microsporidian parasite).